We begin with the raw amino-acid sequence, 296 residues long: 4-hydroxy-tetrahydrodipicolinate synthase (296 aa).

Pyruvate is bound at residue threonine 49. Residue tyrosine 137 is the Proton donor/acceptor of the active site. The active-site Schiff-base intermediate with substrate is lysine 166. Isoleucine 208 contributes to the pyruvate binding site.

The protein belongs to the DapA family. In terms of assembly, homotetramer; dimer of dimers.

It is found in the cytoplasm. The enzyme catalyses L-aspartate 4-semialdehyde + pyruvate = (2S,4S)-4-hydroxy-2,3,4,5-tetrahydrodipicolinate + H2O + H(+). It participates in amino-acid biosynthesis; L-lysine biosynthesis via DAP pathway; (S)-tetrahydrodipicolinate from L-aspartate: step 3/4. In terms of biological role, catalyzes the condensation of (S)-aspartate-beta-semialdehyde [(S)-ASA] and pyruvate to 4-hydroxy-tetrahydrodipicolinate (HTPA). In Chlorobaculum parvum (strain DSM 263 / NCIMB 8327) (Chlorobium vibrioforme subsp. thiosulfatophilum), this protein is 4-hydroxy-tetrahydrodipicolinate synthase.